The sequence spans 429 residues: Histidine--tRNA ligase (429 aa).

It belongs to the class-II aminoacyl-tRNA synthetase family. In terms of assembly, homodimer.

The protein resides in the cytoplasm. It carries out the reaction tRNA(His) + L-histidine + ATP = L-histidyl-tRNA(His) + AMP + diphosphate + H(+). The chain is Histidine--tRNA ligase from Streptococcus pneumoniae serotype 2 (strain D39 / NCTC 7466).